A 261-amino-acid chain; its full sequence is Triosephosphate isomerase (261 aa).

10–12 provides a ligand contact to substrate; the sequence is NWK. Residue H100 is the Electrophile of the active site. E172 serves as the catalytic Proton acceptor. Substrate-binding positions include G178, S218, and 239–240; that span reads GG.

Belongs to the triosephosphate isomerase family. In terms of assembly, homodimer.

Its subcellular location is the cytoplasm. The enzyme catalyses D-glyceraldehyde 3-phosphate = dihydroxyacetone phosphate. It functions in the pathway carbohydrate biosynthesis; gluconeogenesis. Its pathway is carbohydrate degradation; glycolysis; D-glyceraldehyde 3-phosphate from glycerone phosphate: step 1/1. Its function is as follows. Involved in the gluconeogenesis. Catalyzes stereospecifically the conversion of dihydroxyacetone phosphate (DHAP) to D-glyceraldehyde-3-phosphate (G3P). In Saccharopolyspora erythraea (strain ATCC 11635 / DSM 40517 / JCM 4748 / NBRC 13426 / NCIMB 8594 / NRRL 2338), this protein is Triosephosphate isomerase.